The sequence spans 494 residues: Tripartite motif-containing protein 5 (494 aa).

Alanine 2 carries the post-translational modification N-acetylalanine. An RING-type zinc finger spans residues 15–59 (CPICLELLTEPLSLDCGHSFCQACITANHKESTLHQGERSCPLCR). Serine 86 carries the phosphoserine modification. The segment at 91 to 132 (QKVDHCARHGEKLLLFCQQDGNVICWLCERSQEHRGHHTFLV) adopts a B box-type zinc-finger fold. Zn(2+) is bound by residues cysteine 96, histidine 99, cysteine 118, and histidine 124. A coiled-coil region spans residues 132 to 223 (VEEVAEKYQG…RLVQSESDMV (92 aa)). The interval 186-199 (FKQLRDILDCEESK) is required for interaction with GABARAP and for autophagy. A B30.2/SPRY domain is found at 280–494 (PDLKGMLQAF…LPMTLCSPSS (215 aa)).

It belongs to the TRIM/RBCC family. In terms of assembly, can form homodimers and homotrimers. In addition to lower-order dimerization, also exhibits a higher-order multimerization and both low- and high-order multimerizations are essential for its restriction activity. Interacts with BTBD1 and BTBD2. Interacts with PSMC4, PSMC5, PSMD7 and HSPA8/HSC70. Interacts (via B30.2/SPRY domain) with HSPA1A/B. Interacts with PSMC2, MAP3K7/TAK1, TAB2 and TAB3. Interacts with SQSTM1. Interacts with TRIM6 and TRIM34. Interacts with ULK1 (phosphorylated form), GABARAP, GABARAPL1, GABARAPL2, MAP1LC3A, MAP1LC3C and BECN1. Degraded in a proteasome-independent fashion in the absence of viral infection but in a proteasome-dependent fashion following exposure to restriction sensitive virus. Post-translationally, autoubiquitinated in a RING finger- and UBE2D2-dependent manner. Monoubiquitinated by TRIM21. Deubiquitinated by Yersinia YopJ. Ubiquitination may not lead to proteasomal degradation.

The protein resides in the cytoplasm. Its subcellular location is the nucleus. The catalysed reaction is S-ubiquitinyl-[E2 ubiquitin-conjugating enzyme]-L-cysteine + [acceptor protein]-L-lysine = [E2 ubiquitin-conjugating enzyme]-L-cysteine + N(6)-ubiquitinyl-[acceptor protein]-L-lysine.. The protein operates within protein modification; protein ubiquitination. Capsid-specific restriction factor that prevents infection from non-host-adapted retroviruses. Blocks viral replication early in the life cycle, after viral entry but before reverse transcription. In addition to acting as a capsid-specific restriction factor, also acts as a pattern recognition receptor that activates innate immune signaling in response to the retroviral capsid lattice. Binding to the viral capsid triggers its E3 ubiquitin ligase activity, and in concert with the heterodimeric ubiquitin conjugating enzyme complex UBE2V1-UBE2N (also known as UBC13-UEV1A complex) generates 'Lys-63'-linked polyubiquitin chains, which in turn are catalysts in the autophosphorylation of the MAP3K7/TAK1 complex (includes TAK1, TAB2, and TAB3). Activation of the MAP3K7/TAK1 complex by autophosphorylation results in the induction and expression of NF-kappa-B and MAPK-responsive inflammatory genes, thereby leading to an innate immune response in the infected cell. Plays a role in regulating autophagy through activation of autophagy regulator BECN1 by causing its dissociation from its inhibitors BCL2 and TAB2. The sequence is that of Tripartite motif-containing protein 5 (TRIM5) from Cebuella pygmaea (Pygmy marmoset).